The following is a 47-amino-acid chain: Protein DVU_0533 (47 aa).

Residues 18–37 traverse the membrane as a helical segment; it reads WTYILMGVTLLVYVGYWLFL.

Its subcellular location is the cell membrane. HMWC (high-molecular-weight cytochrome c), ORF2, ORF3, ORF4, ORF5 and ORF6 in the HMC operon form a transmembrane protein complex that allows electron flow from the periplasmic hydrogenase to the cytoplasmic enzymes that catalyze reduction of sulfates. The protein is Protein DVU_0533 of Nitratidesulfovibrio vulgaris (strain ATCC 29579 / DSM 644 / CCUG 34227 / NCIMB 8303 / VKM B-1760 / Hildenborough) (Desulfovibrio vulgaris).